Reading from the N-terminus, the 203-residue chain is MSVIAYLLILGAYLLGSISSAVIFCRLAGLPDPREHGSHNPGATNVLRIGGKLSALGVLMADILKGMLPVSLGFYLELPISVIGFIALAACLGHIFPVFFKFQGGKGVATAFGAIIPMGYSVAGLAVGTWLFVFLISGYSSLSAVITALIVPLYIWWFSSELTFPVALVCCLLVYRHHDNIQRLWRGQEDRGWKKKHSRQNGY.

5 consecutive transmembrane segments (helical) span residues 4–24, 56–76, 80–100, 115–135, and 149–169; these read IAYLLILGAYLLGSISSAVIF, LGVLMADILKGMLPVSLGFYL, ISVIGFIALAACLGHIFPVFF, IIPMGYSVAGLAVGTWLFVFL, and LIVPLYIWWFSSELTFPVALV.

It belongs to the PlsY family. As to quaternary structure, probably interacts with PlsX.

The protein resides in the cell inner membrane. The enzyme catalyses an acyl phosphate + sn-glycerol 3-phosphate = a 1-acyl-sn-glycero-3-phosphate + phosphate. The protein operates within lipid metabolism; phospholipid metabolism. Its function is as follows. Catalyzes the transfer of an acyl group from acyl-phosphate (acyl-PO(4)) to glycerol-3-phosphate (G3P) to form lysophosphatidic acid (LPA). This enzyme utilizes acyl-phosphate as fatty acyl donor, but not acyl-CoA or acyl-ACP. The chain is Glycerol-3-phosphate acyltransferase from Glaesserella parasuis serovar 5 (strain SH0165) (Haemophilus parasuis).